The sequence spans 402 residues: Beta sliding clamp (402 aa).

It belongs to the beta sliding clamp family. In terms of assembly, forms a ring-shaped head-to-tail homodimer around DNA which binds and tethers DNA polymerases and other proteins to the DNA. The DNA replisome complex has a single clamp-loading complex (3 tau and 1 each of delta, delta', psi and chi subunits) which binds 3 Pol III cores (1 core on the leading strand and 2 on the lagging strand) each with a beta sliding clamp dimer. Additional proteins in the replisome are other copies of gamma, psi and chi, Ssb, DNA helicase and RNA primase.

Its subcellular location is the cytoplasm. Functionally, confers DNA tethering and processivity to DNA polymerases and other proteins. Acts as a clamp, forming a ring around DNA (a reaction catalyzed by the clamp-loading complex) which diffuses in an ATP-independent manner freely and bidirectionally along dsDNA. Initially characterized for its ability to contact the catalytic subunit of DNA polymerase III (Pol III), a complex, multichain enzyme responsible for most of the replicative synthesis in bacteria; Pol III exhibits 3'-5' exonuclease proofreading activity. The beta chain is required for initiation of replication as well as for processivity of DNA replication. This is Beta sliding clamp (dnaN) from Mycobacterium bovis (strain ATCC BAA-935 / AF2122/97).